The sequence spans 148 residues: 1,4-dihydroxy-2-naphthoyl-CoA hydrolase (148 aa).

Aspartate 15 is a catalytic residue.

This sequence belongs to the 4-hydroxybenzoyl-CoA thioesterase family. DHNA-CoA hydrolase subfamily.

It catalyses the reaction 1,4-dihydroxy-2-naphthoyl-CoA + H2O = 1,4-dihydroxy-2-naphthoate + CoA + H(+). Its pathway is cofactor biosynthesis; phylloquinone biosynthesis. It participates in quinol/quinone metabolism; 1,4-dihydroxy-2-naphthoate biosynthesis; 1,4-dihydroxy-2-naphthoate from chorismate: step 7/7. Catalyzes the hydrolysis of 1,4-dihydroxy-2-naphthoyl-CoA (DHNA-CoA) to 1,4-dihydroxy-2-naphthoate (DHNA), a reaction involved in phylloquinone (vitamin K1) biosynthesis. In Nostoc punctiforme (strain ATCC 29133 / PCC 73102), this protein is 1,4-dihydroxy-2-naphthoyl-CoA hydrolase.